The chain runs to 138 residues: Class I hydrophobin 1 (138 aa).

Residues 1 to 19 form the signal peptide; that stretch reads MRFSAATVSALAMALTVAA. Disulfide bonds link cysteine 45–cysteine 113, cysteine 53–cysteine 107, cysteine 54–cysteine 91, and cysteine 114–cysteine 131.

Belongs to the fungal hydrophobin family. As to quaternary structure, interacts with the lipid droplet coating protein Cap20.

It localises to the secreted. It is found in the lipid droplet. Its function is as follows. Aerial growth, conidiation, and dispersal of filamentous fungi in the environment rely upon a capability of their secreting small amphipathic proteins called hydrophobins (HPBs) with low sequence identity. Class I can self-assemble into an outermost layer of rodlet bundles on aerial cell surfaces, conferring cellular hydrophobicity that supports fungal growth, development and dispersal; whereas Class II form highly ordered films at water-air interfaces through intermolecular interactions but contribute nothing to the rodlet structure. Hydr1 is a class I hydrophobin involved in spore germination, appressorium formation, but not in the formation of the rodlet layer of conidia. Responsible for the full virulence on rubber tree leaves. The chain is Class I hydrophobin 1 from Colletotrichum siamense (Anthracnose fungus).